Here is a 219-residue protein sequence, read N- to C-terminus: Auxin-responsive protein IAA24 (219 aa).

The short motif at 24 to 28 (LCLRL) is the EAR-like (transcriptional repression) element. 2 disordered regions span residues 24-88 (LCLR…AKAQ) and 109-128 (AAAA…QQGG). A compositionally biased stretch (polar residues) spans 60 to 71 (STDSMASGTGTS). Residues 129–215 (GLYVKVSMDG…SCKKLRIMKG (87 aa)) enclose the PB1 domain.

It belongs to the Aux/IAA family. Homodimers and heterodimers. Highly expressed in flowers. Expressed in seedlings.

The protein localises to the nucleus. In terms of biological role, aux/IAA proteins are short-lived transcriptional factors that function as repressors of early auxin response genes at low auxin concentrations. The sequence is that of Auxin-responsive protein IAA24 (IAA24) from Oryza sativa subsp. japonica (Rice).